Reading from the N-terminus, the 1018-residue chain is UPF0182 protein Tfu_0541 (1018 aa).

7 consecutive transmembrane segments (helical) span residues 20–40 (LAPV…AANF), 64–84 (ALLF…SVYF), 115–135 (VFFW…ATAE), 171–191 (VIIG…VVVH), 212–232 (VHLS…YWLE), 254–274 (AVLY…VLFF), and 287–307 (VSLG…PAIV). Disordered regions lie at residues 497–570 (YPVD…QANN) and 939–965 (GDEA…ASSD). 2 stretches are compositionally biased toward acidic residues: residues 542–560 (QDQE…EEEQ) and 939–959 (GDEA…EEEQ).

It belongs to the UPF0182 family.

The protein localises to the cell membrane. The protein is UPF0182 protein Tfu_0541 of Thermobifida fusca (strain YX).